A 233-amino-acid chain; its full sequence is Uridylate kinase (233 aa).

7–10 (KISG) serves as a coordination point for ATP. Residue Gly-49 participates in UMP binding. Gly-50 and Arg-54 together coordinate ATP. UMP contacts are provided by residues Asp-68 and 129 to 136 (TGNPFFTT). Thr-156, Tyr-162, and Asp-165 together coordinate ATP.

Belongs to the UMP kinase family. As to quaternary structure, homohexamer.

It localises to the cytoplasm. It carries out the reaction UMP + ATP = UDP + ADP. The protein operates within pyrimidine metabolism; CTP biosynthesis via de novo pathway; UDP from UMP (UMPK route): step 1/1. Inhibited by UTP. Functionally, catalyzes the reversible phosphorylation of UMP to UDP. This chain is Uridylate kinase, found in Neorickettsia sennetsu (strain ATCC VR-367 / Miyayama) (Ehrlichia sennetsu).